The following is an 858-amino-acid chain: Leucine--tRNA ligase (858 aa).

A 'HIGH' region motif is present at residues 42-52 (PYPSGRLHMGH). Positions 618 to 622 (KMSKS) match the 'KMSKS' region motif. K621 is a binding site for ATP.

It belongs to the class-I aminoacyl-tRNA synthetase family.

The protein resides in the cytoplasm. The enzyme catalyses tRNA(Leu) + L-leucine + ATP = L-leucyl-tRNA(Leu) + AMP + diphosphate. The protein is Leucine--tRNA ligase of Vibrio atlanticus (strain LGP32) (Vibrio splendidus (strain Mel32)).